The following is a 467-amino-acid chain: tRNA-2-methylthio-N(6)-dimethylallyladenosine synthase (467 aa).

The MTTase N-terminal domain occupies 2–118 (PSVFIKTFGC…VAEIADNLLK (117 aa)). [4Fe-4S] cluster-binding residues include cysteine 11, cysteine 47, cysteine 81, cysteine 159, cysteine 163, and cysteine 166. One can recognise a Radical SAM core domain in the interval 145 to 379 (TKAQPIAYVS…LEIQNKITME (235 aa)). Residues 382–445 (QKWVGQVVEI…GHTFYGTPLI (64 aa)) form the TRAM domain.

The protein belongs to the methylthiotransferase family. MiaB subfamily. As to quaternary structure, monomer. Requires [4Fe-4S] cluster as cofactor.

It is found in the cytoplasm. It carries out the reaction N(6)-dimethylallyladenosine(37) in tRNA + (sulfur carrier)-SH + AH2 + 2 S-adenosyl-L-methionine = 2-methylsulfanyl-N(6)-dimethylallyladenosine(37) in tRNA + (sulfur carrier)-H + 5'-deoxyadenosine + L-methionine + A + S-adenosyl-L-homocysteine + 2 H(+). In terms of biological role, catalyzes the methylthiolation of N6-(dimethylallyl)adenosine (i(6)A), leading to the formation of 2-methylthio-N6-(dimethylallyl)adenosine (ms(2)i(6)A) at position 37 in tRNAs that read codons beginning with uridine. In Methylacidiphilum infernorum (isolate V4) (Methylokorus infernorum (strain V4)), this protein is tRNA-2-methylthio-N(6)-dimethylallyladenosine synthase.